The following is a 257-amino-acid chain: PHD finger protein Alfin1 (257 aa).

A disordered region spans residues 145–200 (SKDQLTAHNNGSNSKYKSSGKSRQSESQTKGVKMSAPVKEEVDSGEEEEEDDDEQG). Over residues 153-166 (NNGSNSKYKSSGKS) the composition is skewed to low complexity. Residues 187 to 199 (DSGEEEEEDDDEQ) show a composition bias toward acidic residues. The segment at 200-252 (GATCGACGDNYGTDEFWICCDMCEKWFHGKCVKITPAKAEHIKQYKCPGCSIK) adopts a PHD-type zinc-finger fold.

This sequence belongs to the Alfin family. In terms of assembly, interacts with H3K4me3 and to a lesser extent with H3K4me2. As to expression, predominantly expressed in the roots.

It localises to the nucleus. Its function is as follows. Histone-binding component that specifically recognizes H3 tails trimethylated on 'Lys-4' (H3K4me3), which mark transcription start sites of virtually all active genes. Transcriptional regulator that binds specifically to DNA sequences 5'-GNGGTG-3' or 5'-GTGGNG-3', including promoter elements of the salt-inducible PRP2 gene. Plays a role in salinity tolerance. This Medicago sativa (Alfalfa) protein is PHD finger protein Alfin1 (ALFIN-1).